Reading from the N-terminus, the 505-residue chain is Phosphoglycerate kinase A (505 aa).

(2R)-3-phosphoglycerate-binding residues include Val32, Asp33, Phe34, Asn35, Arg48, Ser70, His71, Gly73, Arg74, Arg224, His260, and Arg261. Positions 306 and 307 each coordinate ADP. Gly306 is a CDP binding site. Ala307 and Lys308 together coordinate AMP. Residue Ala307 coordinates ATP. Mg(2+) is bound at residue Ala307. (2R)-3-phosphoglycerate is bound at residue Lys308. Residue Glu311 participates in CDP binding. Glu311 provides a ligand contact to Mg(2+). 2 residues coordinate ADP: Lys312 and Gly330. An AMP-binding site is contributed by Lys312. Residue Lys312 coordinates ATP. Gly330 is a CDP binding site. Ala331 and Ala403 together coordinate AMP. 2 residues coordinate ATP: Ala331 and Ala403. ADP-binding residues include Ala403 and Asn427. CDP contacts are provided by Gly428 and Phe433. ADP-binding residues include Phe433, Glu434, Glu466, and Ser467. Glu434 provides a ligand contact to AMP. Glu434, Glu466, and Ser467 together coordinate ATP. A Mg(2+)-binding site is contributed by Glu466.

It belongs to the phosphoglycerate kinase family. Monomer. Mg(2+) serves as cofactor.

The enzyme catalyses (2R)-3-phosphoglycerate + ATP = (2R)-3-phospho-glyceroyl phosphate + ADP. Its pathway is carbohydrate degradation; glycolysis; pyruvate from D-glyceraldehyde 3-phosphate: step 2/5. This is Phosphoglycerate kinase A from Trypanosoma brucei brucei.